The sequence spans 318 residues: NADH-ubiquinone oxidoreductase chain 1 (318 aa).

8 helical membrane-spanning segments follow: residues 2-22 (FMIN…FLTL), 69-89 (LLFT…WLPL), 100-120 (LGVL…LWSG), 146-166 (LAII…TNLI), 171-191 (HMWL…STLA), 231-251 (IMMM…TPLV), 253-273 (GIYT…FLWI), and 285-305 (LMHL…MWHV).

It belongs to the complex I subunit 1 family. In terms of assembly, core subunit of respiratory chain NADH dehydrogenase (Complex I) which is composed of 45 different subunits.

The protein localises to the mitochondrion inner membrane. The catalysed reaction is a ubiquinone + NADH + 5 H(+)(in) = a ubiquinol + NAD(+) + 4 H(+)(out). Its function is as follows. Core subunit of the mitochondrial membrane respiratory chain NADH dehydrogenase (Complex I) which catalyzes electron transfer from NADH through the respiratory chain, using ubiquinone as an electron acceptor. Essential for the catalytic activity and assembly of complex I. In Myrmecophaga tridactyla (Giant anteater), this protein is NADH-ubiquinone oxidoreductase chain 1 (MT-ND1).